Reading from the N-terminus, the 395-residue chain is MVQSLHEFLEENINYLKENGLYNEIDTIEGANGPEIKINGKSYINLSSNNYLGLATNEDLKSAAKAAIDTHGVGAGAVRTINGTLDLHDELEETLAKFKGTEAAIAYQSGFNCNMAAISAVMNKNDAILSDELNHASIIDGCRLSKAKIIRVNHSDMDDLRAKAKEAVESGQYNKVMYITDGVFSMDGDVAKLPEIVEIAEEFGLLTYVDDAHGSGVMGKGAGTVKHFGLQDKIDFQIGTLSKAIGVVGGYVAGTKELIDWLKAQSRPFLFSTSLAPGDTKAITEAVKKLMASTELHDKLWDNAQYLKNGLSKLGYDTGESETPITPVIIGEEKTTQEFSKRLKDEGVYVKSIVFPTVPRGTGRVRNMPTAAHTKDMLDEAIAAYEKVGKEMNLI.

Position 110 to 111 (110 to 111 (GF)) interacts with pyridoxal 5'-phosphate. Histidine 135 contacts substrate. Residues serine 185, 210 to 213 (DDAH), and 240 to 243 (TLSK) contribute to the pyridoxal 5'-phosphate site. The residue at position 243 (lysine 243) is an N6-(pyridoxal phosphate)lysine. Threonine 357 is a binding site for substrate.

It belongs to the class-II pyridoxal-phosphate-dependent aminotransferase family. Homodimer. Requires pyridoxal 5'-phosphate as cofactor.

The chain is Putative pyridoxal phosphate-dependent acyltransferase from Staphylococcus aureus (strain MRSA252).